Reading from the N-terminus, the 902-residue chain is Adhesion G-protein coupled receptor D1 (902 aa).

An N-terminal signal peptide occupies residues 1–25 (MKKLLPLCCWHSWLLLFYCDFQVRG). Residues 26 to 598 (AHTRSHVHPG…GHQVALSSIS (573 aa)) are Extracellular-facing. N68, N76, N83, N89, N121, N183, N217, N310, N330, N337, N347, N422, N504, N529, and N561 each carry an N-linked (GlcNAc...) asparagine glycan. The region spanning 111 to 304 (KGVTFLYYRK…VNTMAPTNAY (194 aa)) is the Pentraxin (PTX) domain. Residues 399–585 (QVAIVGSSSM…AILMQVVPLE (187 aa)) form the GAIN-B domain. 2 disulfides stabilise this stretch: C538-C567 and C555-C569. The tract at residues 538 to 585 (CAFLDFSSGEGIWSNQGCALTEGNLSYSICRCTHLTNFAILMQVVPLE) is GPS. The segment at 574 to 582 (NFAILMQVV) is stachel. Q591 is a 17beta-hydroxy-5alpha-androstan-3-one binding site. A helical membrane pass occupies residues 599-619 (YIGCSLSVLCLAITLVTFAVL). The Cytoplasmic segment spans residues 620 to 630 (SSVSTIRNQRY). The chain crosses the membrane as a helical span at residues 631–651 (HIHANLSCAVLVAQVLLLISF). The Extracellular portion of the chain corresponds to 652–661 (RFEPGTAPCQ). Cysteines 660 and 732 form a disulfide. A helical transmembrane segment spans residues 662 to 682 (VLAMLLHYFFLSAFAWMLVEG). Residues 683-702 (LHLYSMVIKVFGSEDSKHRY) lie on the Cytoplasmic side of the membrane. A helical transmembrane segment spans residues 703–723 (YYGIGWGFPLLICIISIVFAM). Residues 724–739 (DSYGTSKNCWLSLGNG) are Extracellular-facing. A helical membrane pass occupies residues 740-760 (AIWAFVAPALFIIVVNIGILI). Over 761–788 (AVTRVISQISAENYKIHGDPSAFKLTAK) the chain is Cytoplasmic. The chain crosses the membrane as a helical span at residues 789 to 809 (AVAVLLPILGTSWVFGVLAVN). Residues 810–812 (NQA) are Extracellular-facing. Residues 813-833 (MVFQYMFAILNSLQGFFIFLF) form a helical membrane-spanning segment. Residues 834–902 (HCLLNSEVRA…SGHRVDLSAV (69 aa)) lie on the Cytoplasmic side of the membrane. Residues 865–902 (KPFSSDIMNGTRPATGSTRLSPWDKSSHSGHRVDLSAV) are disordered. Residues 870–884 (DIMNGTRPATGSTRL) show a composition bias toward polar residues. A compositionally biased stretch (basic and acidic residues) spans 889 to 902 (KSSHSGHRVDLSAV).

Belongs to the G-protein coupled receptor 2 family. Adhesion G-protein coupled receptor (ADGR) subfamily. In terms of assembly, heterodimer of 2 chains generated by proteolytic processing; the large extracellular N-terminal fragment and the membrane-bound C-terminal fragment predominantly remain associated and non-covalently linked. Interacts with ESYT1; interaction takes place in absence of cytosolic calcium and inhibits the G protein-coupled receptor activity of ADGRD1. Post-translationally, autoproteolytically processed at the GPS region of the GAIN-B domain; this cleavage modulates receptor activity. Cleavage takes place early in the secretory pathway before N-glycosylation.

It localises to the cell membrane. With respect to regulation, forms a heterodimer of 2 chains generated by proteolytic processing that remain associated through non-covalent interactions mediated by the GAIN-B domain. In the inactivated receptor, the Stachel sequence (also named stalk) is embedded in the GAIN-B domain, where it adopts a beta-strand conformation. On activation, the Stachel moves into the 7 transmembrane region and adopts a twisted hook-shaped configuration that forms contacts within the receptor, leading to coupling of a G-alpha protein, which activates signaling. The cleaved GAIN-B and N-terminal domains can then dissociate from the rest of the receptor. Interaction with ESYT1 in absence of cytosolic calcium inhibits the G protein-coupled receptor activity; interaction and inhibition is relieved when cytosolic calcium increases. In terms of biological role, adhesion G-protein coupled receptor (aGPCR) for androgen hormone 5alpha-dihydrotestosterone (5alpha-DHT), also named 17beta-hydroxy-5alpha-androstan-3-one, the most potent hormone among androgens. Also activated by methenolone drug. Ligand binding causes a conformation change that triggers signaling via guanine nucleotide-binding proteins (G proteins) and modulates the activity of downstream effectors, such as adenylate cyclase. ADGRD1 is coupled to G(s) G proteins and mediates activation of adenylate cyclase activity. Acts as a 5alpha-DHT receptor in muscle cells, thereby increasing intracellular cyclic AMP (cAMP) levels and enhancing muscle strength. The chain is Adhesion G-protein coupled receptor D1 (ADGRD1) from Bos taurus (Bovine).